Here is a 357-residue protein sequence, read N- to C-terminus: SUN domain-containing protein 3 (357 aa).

At 1–47 (MSGKTKARRAAMFFRRCSEDASGSASGNALLSEDENPDANGVTRSWK) the chain is on the nuclear side. A helical membrane pass occupies residues 48 to 64 (IILSTMLTLTFLLVGLL). Residues 65–357 (NHQWLKETDV…RVHGTPGKHI (293 aa)) are Perinuclear space-facing. Residues 98–146 (RLRMPKEQLELLKKESQNLENNFRQILFLIEQIDVLKALLRDMKDGMDN) adopt a coiled-coil conformation. The SUN domain occupies 193-354 (GASIIEAGTS…YRFRVHGTPG (162 aa)).

In terms of assembly, self-associates. Interacts with SYNE1 and SPAG4/SUN4. Proposed to form a spermatogenesis-specific LINC complex with SYNE1 during sperm head formation possibly implicating a SUN domain-based heterotrimer with SPAG4/SUN4 associating with SYNE1.

The protein localises to the membrane. It is found in the nucleus envelope. It localises to the nucleus inner membrane. Its function is as follows. As a probable component of the LINC (LInker of Nucleoskeleton and Cytoskeleton) complex, involved in the connection between the nuclear lamina and the cytoskeleton. The nucleocytoplasmic interactions established by the LINC complex play an important role in the transmission of mechanical forces across the nuclear envelope and in nuclear movement and positioning. May be involved in nuclear remodeling during sperm head formation in spermatogenesis. A probable SUN3:SYNE1 LINC complex may tether spermatid nuclei to posterior cytoskeletal structures such as the manchette. In Homo sapiens (Human), this protein is SUN domain-containing protein 3 (SUN3).